The primary structure comprises 823 residues: Lon protease (823 aa).

The Lon N-terminal domain maps to 22 to 217 (LPLLPVRDVV…KVNEHLNKEH (196 aa)). 369–376 (GPPGVGKT) is an ATP binding site. The Lon proteolytic domain occupies 605–786 (KNEVGIVTGL…DDVLAVALET (182 aa)). Residues S692 and K735 contribute to the active site. Positions 788 to 823 (PPPPPASEGKPAATVKAPPRRGIAAPRKGAMAGAKS) are disordered.

The protein belongs to the peptidase S16 family. Homohexamer. Organized in a ring with a central cavity.

The protein resides in the cytoplasm. It carries out the reaction Hydrolysis of proteins in presence of ATP.. In terms of biological role, ATP-dependent serine protease that mediates the selective degradation of mutant and abnormal proteins as well as certain short-lived regulatory proteins. Required for cellular homeostasis and for survival from DNA damage and developmental changes induced by stress. Degrades polypeptides processively to yield small peptide fragments that are 5 to 10 amino acids long. Binds to DNA in a double-stranded, site-specific manner. This is Lon protease from Geobacter metallireducens (strain ATCC 53774 / DSM 7210 / GS-15).